Reading from the N-terminus, the 449-residue chain is Glucose-6-phosphate isomerase (449 aa).

E291 (proton donor) is an active-site residue. Active-site residues include H312 and K426.

It belongs to the GPI family.

The protein resides in the cytoplasm. It catalyses the reaction alpha-D-glucose 6-phosphate = beta-D-fructose 6-phosphate. It participates in carbohydrate biosynthesis; gluconeogenesis. Its pathway is carbohydrate degradation; glycolysis; D-glyceraldehyde 3-phosphate and glycerone phosphate from D-glucose: step 2/4. In terms of biological role, catalyzes the reversible isomerization of glucose-6-phosphate to fructose-6-phosphate. This Streptococcus pneumoniae serotype 4 (strain ATCC BAA-334 / TIGR4) protein is Glucose-6-phosphate isomerase.